The primary structure comprises 325 residues: Tagatose 1,6-diphosphate aldolase 1 (325 aa).

It belongs to the aldolase LacD family.

It catalyses the reaction D-tagatofuranose 1,6-bisphosphate = D-glyceraldehyde 3-phosphate + dihydroxyacetone phosphate. It participates in carbohydrate metabolism; D-tagatose 6-phosphate degradation; D-glyceraldehyde 3-phosphate and glycerone phosphate from D-tagatose 6-phosphate: step 2/2. The chain is Tagatose 1,6-diphosphate aldolase 1 (lacD1) from Streptococcus pyogenes serotype M1.